The following is a 342-amino-acid chain: Aspartate carbamoyltransferase catalytic subunit (342 aa).

Residues Arg-54 and Thr-55 each coordinate carbamoyl phosphate. Lys-82 is an L-aspartate binding site. Arg-104, His-134, and Gln-137 together coordinate carbamoyl phosphate. L-aspartate-binding residues include Arg-177 and Arg-232. 2 residues coordinate carbamoyl phosphate: Gly-277 and Pro-278.

It belongs to the aspartate/ornithine carbamoyltransferase superfamily. ATCase family. In terms of assembly, heterododecamer (2C3:3R2) of six catalytic PyrB chains organized as two trimers (C3), and six regulatory PyrI chains organized as three dimers (R2).

The catalysed reaction is carbamoyl phosphate + L-aspartate = N-carbamoyl-L-aspartate + phosphate + H(+). It functions in the pathway pyrimidine metabolism; UMP biosynthesis via de novo pathway; (S)-dihydroorotate from bicarbonate: step 2/3. Catalyzes the condensation of carbamoyl phosphate and aspartate to form carbamoyl aspartate and inorganic phosphate, the committed step in the de novo pyrimidine nucleotide biosynthesis pathway. This Pseudarthrobacter chlorophenolicus (strain ATCC 700700 / DSM 12829 / CIP 107037 / JCM 12360 / KCTC 9906 / NCIMB 13794 / A6) (Arthrobacter chlorophenolicus) protein is Aspartate carbamoyltransferase catalytic subunit.